Here is a 344-residue protein sequence, read N- to C-terminus: Heat-inducible transcription repressor HrcA (344 aa).

This sequence belongs to the HrcA family.

In terms of biological role, negative regulator of class I heat shock genes (grpE-dnaK-dnaJ and groELS operons). Prevents heat-shock induction of these operons. This chain is Heat-inducible transcription repressor HrcA, found in Streptococcus mutans serotype c (strain ATCC 700610 / UA159).